A 287-amino-acid polypeptide reads, in one-letter code: MTAMPSFAVVTDGGLDAYPTLLNDVPVAPFSVAFGERSYPMNEVSRQWLYDELGRNPAHPTSSQPSPQQWLDAYAAVPSGTDILAVTISSGLSGSRNAAAQARDLAGRQVTLHDSMTLSAAQAFQVHAANVAAQRGESMETAIAWMNAVQAETELQFTIETLEYLRRGGRIGTVAAALGGLLNLKPVVMVDKKTGTYVNAGRARSYRGGIEAVTSQVTRKYGEGTPLRVGLLYGTHPEDADQALEQLAARHPIVWSDRTGVNPVLSVHVGPRALGVAAAPGAWPWER.

Residues 7–280 (FAVVTDGGLD…PRALGVAAAP (274 aa)) form the DegV domain. 2 residues coordinate hexadecanoate: Ser62 and Ser93.

May bind long-chain fatty acids, such as palmitate, and may play a role in lipid transport or fatty acid metabolism. The chain is DegV domain-containing protein DR_0500 from Deinococcus radiodurans (strain ATCC 13939 / DSM 20539 / JCM 16871 / CCUG 27074 / LMG 4051 / NBRC 15346 / NCIMB 9279 / VKM B-1422 / R1).